Consider the following 565-residue polypeptide: Periplasmic trehalase (565 aa).

Positions 1–30 (MKSPAPSRPQKMALIPACIFLCFAALSVQA) are cleaved as a signal peptide. Substrate is bound by residues Arg152, 159–160 (WD), Asn196, 205–207 (RSQ), 277–279 (RPE), and Gly310. Residues Asp312 and Glu496 each act as proton donor/acceptor in the active site. Glu511 contributes to the substrate binding site. The interval 538–565 (PCDNVPATRPTVKSATTQPSTKEAQPTP) is disordered. Positions 548–565 (TVKSATTQPSTKEAQPTP) are enriched in polar residues.

This sequence belongs to the glycosyl hydrolase 37 family. Monomer.

It is found in the periplasm. It catalyses the reaction alpha,alpha-trehalose + H2O = alpha-D-glucose + beta-D-glucose. Provides the cells with the ability to utilize trehalose at high osmolarity by splitting it into glucose molecules that can subsequently be taken up by the phosphotransferase-mediated uptake system. The polypeptide is Periplasmic trehalase (Escherichia coli O139:H28 (strain E24377A / ETEC)).